Reading from the N-terminus, the 258-residue chain is Global transcriptional regulator CodY (258 aa).

The segment at 1 to 156 (MSSLLEKTRQ…SATIIGLEIL (156 aa)) is GAF domain. The H-T-H motif DNA-binding region spans 204 to 223 (ASKIADKVGITRSVIVNALR).

The protein belongs to the CodY family.

The protein localises to the cytoplasm. In terms of biological role, DNA-binding global transcriptional regulator which is involved in the adaptive response to starvation and acts by directly or indirectly controlling the expression of numerous genes in response to nutrient availability. During rapid exponential growth, CodY is highly active and represses genes whose products allow adaptation to nutrient depletion. The chain is Global transcriptional regulator CodY from Clostridium tetani (strain Massachusetts / E88).